The primary structure comprises 244 residues: MHVPASLQQSSSSSSSCTEEENKHHMGIDVIIKVTKQDQTPTNDKICQSVTEITESESDPDPEVESEDDSTSVEDVDPPTTYYSIIGGGLRMNFGFTKCPQIKSISESADGNTVNARLSSVSPGQGKDSPAITHEEALAMIKDCEVSIDIRCSEEEKDSDIKTHPVLGSNISHKKVSYEDIIGSTIVDTKCVKNLEFSVRIGDMCKESSELEVKDGFKYVDGSASEGATDDTSLIDSTKLKACV.

Residues 1–79 (MHVPASLQQS…STSVEDVDPP (79 aa)) are disordered. Residues 37–53 (QDQTPTNDKICQSVTEI) are compositionally biased toward polar residues. The segment covering 54–77 (TESESDPDPEVESEDDSTSVEDVD) has biased composition (acidic residues).

This sequence belongs to the orthopoxvirus OPG001 family.

It localises to the host cytoplasm. Its function is as follows. The protein is truncated in this vaccinal strain and presumably inactive, because the lack of signal peptide prevents the protein of being secreted. In the wild-type viruses inhibits host immune defense by binding to host chemokines. Binds host CC chemokines (beta chemokines) such as RANTES with high affinity, but not CXC or C chemokines (alpha and gamma chemokines). The polypeptide is Inactive chemokine-binding protein (OPG001) (Vaccinia virus (strain Western Reserve) (VACV)).